The sequence spans 78 residues: RNA-binding protein Hfq (78 aa).

Positions 10-69 (DPFLNALRKEHVPVSIYLVNGIKLQGHIESFDQYVVLLRNTVTQMVYKHAISTVVPARAV) constitute a Sm domain.

Belongs to the Hfq family. As to quaternary structure, homohexamer.

RNA chaperone that binds small regulatory RNA (sRNAs) and mRNAs to facilitate mRNA translational regulation in response to envelope stress, environmental stress and changes in metabolite concentrations. Also binds with high specificity to tRNAs. The protein is RNA-binding protein Hfq of Janthinobacterium sp. (strain Marseille) (Minibacterium massiliensis).